The primary structure comprises 156 residues: Protein US1 (156 aa).

Disordered stretches follow at residues 90 to 114 and 133 to 156; these read RSRS…SDGD and ARRW…DSTS. The segment covering 96–111 has biased composition (low complexity); it reads AESGRSSSSSSVSVLS. Residues 147 to 156 show a composition bias toward polar residues; it reads SQQAKNDSTS.

In Homo sapiens (Human), this protein is Protein US1 (US1).